We begin with the raw amino-acid sequence, 428 residues long: GTPase Obg (428 aa).

The Obg domain occupies 1–158 (MFVDQVQVEV…RFIKLELKVL (158 aa)). Residues 159 to 333 (ADVGLVGFPS…LMHKTAEVLK (175 aa)) enclose the OBG-type G domain. GTP contacts are provided by residues 165-172 (GFPSVGKS), 190-194 (FTTLV), 212-215 (DLPG), 282-285 (TKMD), and 314-316 (SSL). The Mg(2+) site is built by Ser-172 and Thr-192. One can recognise an OCT domain in the interval 350–428 (YKYQPEPALK…IDDFTFEFVE (79 aa)).

This sequence belongs to the TRAFAC class OBG-HflX-like GTPase superfamily. OBG GTPase family. Monomer. Requires Mg(2+) as cofactor.

It is found in the cytoplasm. In terms of biological role, an essential GTPase which binds GTP, GDP and possibly (p)ppGpp with moderate affinity, with high nucleotide exchange rates and a fairly low GTP hydrolysis rate. Plays a role in control of the cell cycle, stress response, ribosome biogenesis and in those bacteria that undergo differentiation, in morphogenesis control. This Lacticaseibacillus casei (strain BL23) (Lactobacillus casei) protein is GTPase Obg.